Consider the following 337-residue polypeptide: GTPase Obg (337 aa).

Residues 1-161 form the Obg domain; that stretch reads MNLTDNAVIF…FKIKLDFVFL (161 aa). The OBG-type G domain maps to 162 to 333; it reads ADVGLFGYSN…LINKILLFLE (172 aa). GTP contacts are provided by residues 168 to 175, 193 to 197, 214 to 217, 282 to 285, and 314 to 316; these read GYSNTGRS, FTTLF, DIPS, NKTD, and SLN. Residues Ser175 and Thr195 each contribute to the Mg(2+) site.

Belongs to the TRAFAC class OBG-HflX-like GTPase superfamily. OBG GTPase family. In terms of assembly, monomer. Mg(2+) is required as a cofactor.

The protein localises to the cytoplasm. In terms of biological role, an essential GTPase which binds GTP, GDP and possibly (p)ppGpp with moderate affinity, with high nucleotide exchange rates and a fairly low GTP hydrolysis rate. Plays a role in control of the cell cycle, stress response, ribosome biogenesis and in those bacteria that undergo differentiation, in morphogenesis control. This Wigglesworthia glossinidia brevipalpis protein is GTPase Obg.